We begin with the raw amino-acid sequence, 163 residues long: Inorganic pyrophosphatase (163 aa).

Mg(2+) is bound at residue glutamate 8. Lysine 16, arginine 30, and tyrosine 42 together coordinate substrate. Residues aspartate 52, aspartate 57, aspartate 84, and aspartate 89 each contribute to the Mg(2+) site. Aspartate 89 (proton acceptor) is an active-site residue. Tyrosine 126 serves as a coordination point for substrate.

It belongs to the PPase family. In terms of assembly, homohexamer. Requires Mg(2+) as cofactor.

It is found in the cytoplasm. It carries out the reaction diphosphate + H2O = 2 phosphate + H(+). Functionally, catalyzes the hydrolysis of inorganic pyrophosphate (PPi) forming two phosphate ions. This chain is Inorganic pyrophosphatase, found in Streptomyces coelicolor (strain ATCC BAA-471 / A3(2) / M145).